The sequence spans 520 residues: 6-phosphofructo-2-kinase/fructose-2,6-bisphosphatase 3 (520 aa).

A 6-phosphofructo-2-kinase region spans residues 1-245; that stretch reads MPLELTQSRV…VYYLMNIHVQ (245 aa). Residue 42 to 50 coordinates ATP; the sequence is GLPARGKTY. The beta-D-fructose 6-phosphate site is built by R75 and R99. Residue D125 is part of the active site. Residues T127 and R133 each contribute to the beta-D-fructose 6-phosphate site. C155 is a catalytic residue. 164–169 lines the ATP pocket; it reads NIMEVK. K169, R190, and Y194 together coordinate beta-D-fructose 6-phosphate. The interval 246 to 520 is fructose-2,6-bisphosphatase; sequence PRTIYLCRHG…RSSADSSRKH (275 aa). Position 253 (R253) interacts with beta-D-fructose 2,6-bisphosphate. H254 (tele-phosphohistidine intermediate) is an active-site residue. Beta-D-fructose 2,6-bisphosphate-binding residues include N260 and G266. E323 (proton donor/acceptor) is an active-site residue. Beta-D-fructose 2,6-bisphosphate contacts are provided by Y334, R348, K352, Y363, Q389, and R393. 345–348 contacts ATP; sequence YALR. Residues 389–393 and Y425 contribute to the ATP site; that span reads QAVLR. The tract at residues 443–520 is disordered; the sequence is RERSEDAKKG…RSSADSSRKH (78 aa). S461 is subject to Phosphoserine; by AMPK. At T463 the chain carries Phosphothreonine. S467 is subject to Phosphoserine. Position 471 is a phosphothreonine; by PKC (T471). The span at 502 to 520 shows a compositional bias: polar residues; that stretch reads LPGQNMKGSRSSADSSRKH.

The protein in the C-terminal section; belongs to the phosphoglycerate mutase family. As to quaternary structure, homodimer. Forms a heterodimer with PFKFB2. In terms of processing, phosphorylation by AMPK stimulates activity. In terms of tissue distribution, ubiquitous.

It carries out the reaction beta-D-fructose 2,6-bisphosphate + H2O = beta-D-fructose 6-phosphate + phosphate. The catalysed reaction is beta-D-fructose 6-phosphate + ATP = beta-D-fructose 2,6-bisphosphate + ADP + H(+). Functionally, catalyzes both the synthesis and degradation of fructose 2,6-bisphosphate. This chain is 6-phosphofructo-2-kinase/fructose-2,6-bisphosphatase 3 (PFKFB3), found in Homo sapiens (Human).